Here is a 227-residue protein sequence, read N- to C-terminus: Ribose-5-phosphate isomerase A (227 aa).

Substrate is bound by residues Thr-30 to Thr-33, Asp-86 to Asp-89, and Lys-99 to Gly-102. Glu-108 acts as the Proton acceptor in catalysis. Lys-126 is a substrate binding site.

This sequence belongs to the ribose 5-phosphate isomerase family. In terms of assembly, homodimer.

The catalysed reaction is aldehydo-D-ribose 5-phosphate = D-ribulose 5-phosphate. The protein operates within carbohydrate degradation; pentose phosphate pathway; D-ribose 5-phosphate from D-ribulose 5-phosphate (non-oxidative stage): step 1/1. Functionally, catalyzes the reversible conversion of ribose-5-phosphate to ribulose 5-phosphate. This is Ribose-5-phosphate isomerase A from Thermus thermophilus (strain ATCC 27634 / DSM 579 / HB8).